We begin with the raw amino-acid sequence, 853 residues long: uncharacterized protein (853 aa).

Positions methionine 1 to lysine 11 are enriched in basic residues. 3 disordered regions span residues methionine 1–valine 448, isoleucine 485–asparagine 621, and glutamate 635–glutamate 658. Over residues isoleucine 20–glycine 37 the composition is skewed to acidic residues. Residues asparagine 42 to lysine 55 show a composition bias toward basic residues. Over residues glutamate 60–glutamate 74 the composition is skewed to acidic residues. The segment covering glycine 75–lysine 87 has biased composition (basic and acidic residues). A compositionally biased stretch (basic residues) spans lysine 88 to histidine 107. Residues glutamate 112 to glutamate 121 show a composition bias toward acidic residues. Basic residues predominate over residues arginine 124–asparagine 139. Composition is skewed to acidic residues over residues glutamate 143–valine 166 and aspartate 179–glutamine 197. The span at aspartate 216–arginine 228 shows a compositional bias: basic residues. Composition is skewed to acidic residues over residues aspartate 232–asparagine 260 and lysine 268–lysine 286. 3 stretches are compositionally biased toward basic and acidic residues: residues glutamine 287 to tyrosine 361, serine 370 to tyrosine 400, and arginine 411 to serine 425. 3 stretches are compositionally biased toward low complexity: residues serine 426–asparagine 447, asparagine 510–serine 613, and asparagine 636–lysine 652.

This is an uncharacterized protein from Dictyostelium discoideum (Social amoeba).